The following is a 318-amino-acid chain: Protein W (318 aa).

Disordered regions lie at residues 1–23 (MDQD…GGRE) and 38–318 (SEPT…KKGA). A compositionally biased stretch (basic and acidic residues) spans 7 to 20 (ILKEDSEVEREAPG). Over residues 50-59 (LHNTINTPQG) the composition is skewed to polar residues. S68 bears the Phosphoserine; by host mark. The segment covering 83 to 101 (RSGEESRVSGRTSKPEAEA) has biased composition (basic and acidic residues). S125 is subject to Phosphoserine; by host. The segment covering 150 to 168 (GIEDENREMAAHPDKRGED) has biased composition (basic and acidic residues). Positions 191–206 (ASNNGRSMEPGSSHSA) are enriched in polar residues. Phosphoserine; by host occurs at positions 192, 249, 257, and 260.

This is Protein W (P/V/C) from Sendai virus (strain Fushimi) (SeV).